Consider the following 78-residue polypeptide: UPF0349 protein Sca_0544 (78 aa).

Belongs to the UPF0349 family.

The protein is UPF0349 protein Sca_0544 of Staphylococcus carnosus (strain TM300).